A 250-amino-acid polypeptide reads, in one-letter code: tRNA (guanine-N(1)-)-methyltransferase (250 aa).

Residues Gly114 and 134–139 each bind S-adenosyl-L-methionine; that span reads IGDYVL.

Belongs to the RNA methyltransferase TrmD family. Homodimer.

Its subcellular location is the cytoplasm. It catalyses the reaction guanosine(37) in tRNA + S-adenosyl-L-methionine = N(1)-methylguanosine(37) in tRNA + S-adenosyl-L-homocysteine + H(+). Functionally, specifically methylates guanosine-37 in various tRNAs. In Moorella thermoacetica (strain ATCC 39073 / JCM 9320), this protein is tRNA (guanine-N(1)-)-methyltransferase.